Reading from the N-terminus, the 221-residue chain is Ribosomal RNA small subunit methyltransferase G 3 (221 aa).

Residues Gly85, Phe90, 136 to 137 (IE), and Arg150 contribute to the S-adenosyl-L-methionine site.

This sequence belongs to the methyltransferase superfamily. RNA methyltransferase RsmG family.

Its subcellular location is the cytoplasm. The enzyme catalyses guanosine(527) in 16S rRNA + S-adenosyl-L-methionine = N(7)-methylguanosine(527) in 16S rRNA + S-adenosyl-L-homocysteine. Functionally, specifically methylates the N7 position of guanine in position 527 of 16S rRNA. The chain is Ribosomal RNA small subunit methyltransferase G 3 from Bdellovibrio bacteriovorus (strain ATCC 15356 / DSM 50701 / NCIMB 9529 / HD100).